Here is a 408-residue protein sequence, read N- to C-terminus: Peptidase T (408 aa).

Residues 1–28 (MKNQLIDRLTRYTTIDTQSDPKSTTTPS) are disordered. Polar residues predominate over residues 11 to 28 (RYTTIDTQSDPKSTTTPS). Residue His78 participates in Zn(2+) binding. The active site involves Asp80. Zn(2+) is bound at residue Asp140. The active-site Proton acceptor is Glu174. Zn(2+) contacts are provided by Glu175, Asp197, and His379.

This sequence belongs to the peptidase M20B family. Requires Zn(2+) as cofactor.

The protein localises to the cytoplasm. It carries out the reaction Release of the N-terminal residue from a tripeptide.. Functionally, cleaves the N-terminal amino acid of tripeptides. The protein is Peptidase T of Staphylococcus aureus (strain USA300 / TCH1516).